A 122-amino-acid polypeptide reads, in one-letter code: Large ribosomal subunit protein uL14c (122 aa).

The protein belongs to the universal ribosomal protein uL14 family. In terms of assembly, part of the 50S ribosomal subunit.

Its subcellular location is the plastid. The protein resides in the chloroplast. In terms of biological role, binds to 23S rRNA. This is Large ribosomal subunit protein uL14c from Pinus koraiensis (Korean pine).